We begin with the raw amino-acid sequence, 242 residues long: Ubiquinone/menaquinone biosynthesis C-methyltransferase UbiE (242 aa).

Residues threonine 69, aspartate 87, and 114–115 contribute to the S-adenosyl-L-methionine site; that span reads NA.

It belongs to the class I-like SAM-binding methyltransferase superfamily. MenG/UbiE family.

It catalyses the reaction a 2-demethylmenaquinol + S-adenosyl-L-methionine = a menaquinol + S-adenosyl-L-homocysteine + H(+). It carries out the reaction a 2-methoxy-6-(all-trans-polyprenyl)benzene-1,4-diol + S-adenosyl-L-methionine = a 5-methoxy-2-methyl-3-(all-trans-polyprenyl)benzene-1,4-diol + S-adenosyl-L-homocysteine + H(+). It functions in the pathway quinol/quinone metabolism; menaquinone biosynthesis; menaquinol from 1,4-dihydroxy-2-naphthoate: step 2/2. The protein operates within cofactor biosynthesis; ubiquinone biosynthesis. Methyltransferase required for the conversion of demethylmenaquinol (DMKH2) to menaquinol (MKH2) and the conversion of 2-polyprenyl-6-methoxy-1,4-benzoquinol (DDMQH2) to 2-polyprenyl-3-methyl-6-methoxy-1,4-benzoquinol (DMQH2). This is Ubiquinone/menaquinone biosynthesis C-methyltransferase UbiE from Zymomonas mobilis subsp. mobilis (strain ATCC 31821 / ZM4 / CP4).